The sequence spans 537 residues: Tripeptidyl aminopeptidase (537 aa).

A signal peptide spans 1–36 (MRKSSIRRRATAFGTAGALVTATLIAGAVSAPAASA). The propeptide occupies 37-39 (APA). Positions 119–497 (GALIYNPGGP…SRLITERDAG (379 aa)) constitute an AB hydrolase-1 domain. Serine 245 acts as the Nucleophile in catalysis. Aspartate 470 is an active-site residue. The active-site Proton donor is histidine 499.

Belongs to the peptidase S33 family.

It localises to the secreted. Functionally, cleaves tripeptides from the N-termini of proteins. Does not cleave mono- or dipeptides, or N-terminally blocked peptides. The chain is Tripeptidyl aminopeptidase from Streptomyces lividans.